A 478-amino-acid polypeptide reads, in one-letter code: Glutamate--tRNA ligase (478 aa).

The 'HIGH' region motif lies at Pro23–Asn33. Over residues Lys130–Lys145 the composition is skewed to basic and acidic residues. The tract at residues Lys130–Gly153 is disordered. The 'KMSKS' region signature appears at Lys255–Arg259. Residue Lys258 participates in ATP binding.

It belongs to the class-I aminoacyl-tRNA synthetase family. Glutamate--tRNA ligase type 1 subfamily. In terms of assembly, monomer.

It localises to the cytoplasm. The enzyme catalyses tRNA(Glu) + L-glutamate + ATP = L-glutamyl-tRNA(Glu) + AMP + diphosphate. In terms of biological role, catalyzes the attachment of glutamate to tRNA(Glu) in a two-step reaction: glutamate is first activated by ATP to form Glu-AMP and then transferred to the acceptor end of tRNA(Glu). The polypeptide is Glutamate--tRNA ligase (Paracidovorax citrulli (strain AAC00-1) (Acidovorax citrulli)).